The primary structure comprises 538 residues: MALPYHIFLFTVLLPSFTLTAPPPCRCMTSSSPYQEFLWRMHHPGNIDAPSYRSFSKGTPTFTAHTHMPRNCYNSATLCMHGNTHYWTGKMINPSCPGGLGVTVCWTYFTHTGMSDGGGVQDEAREKHVKEVISQLTQVHSTSSPYKGLDLSKLHETLRTHTRLVSLFNTTLTGLHEVSAQNPTNCWMCLPLAFRPYVSIPVPEQWNNFSTEINTTSVLVGPLVSNLEITHTSNLTCVKFSNTTNTTNSQCIRWVTPPTQVVCLPSGIFFVCGTSAYRCLNGSSESMCFLSFLVPPMTIYTEQDLYNYVVSKPRNKRVPILPFVMAAGVLGALGTGIGGITTSTQFYYKLSQELNGDMERVADSLVTLQDQLNSIAAVVLQNRRALDLLTAERGGTCLFLGEECCYYVNQSGIVTEKVKEIRDRIQRRAEELRNIGPWGLFSQWMPWILPFLGPLAAIILLLLFGPCIFNLLVNFVSSRIEAVKLQMEPKMQSKTKIYHRPLDWPASPRSDVNDIKGTPPEEISTAQPLLRPNSAGSS.

Residues 1–20 (MALPYHIFLFTVLLPSFTLT) form the signal peptide. Over 21–443 (APPPCRCMTS…NIGPWGLFSQ (423 aa)) the chain is Extracellular. N-linked (GlcNAc...) asparagine glycosylation occurs at asparagine 169. The short motif at 186 to 189 (CWMC) is the CXXC element. 3 disulfide bridges follow: cysteine 186/cysteine 189, cysteine 186/cysteine 405, and cysteine 397/cysteine 404. N-linked (GlcNAc...) asparagine glycans are attached at residues asparagine 208, asparagine 214, asparagine 234, asparagine 242, asparagine 245, and asparagine 281. The tract at residues 320–340 (ILPFVMAAGVLGALGTGIGGI) is fusion peptide. The immunosuppression stretch occupies residues 380–396 (LQNRRALDLLTAERGGT). Residues 397–405 (CLFLGEECC) carry the CX6CC motif. Residue asparagine 409 is glycosylated (N-linked (GlcNAc...) asparagine). A helical transmembrane segment spans residues 444 to 464 (WMPWILPFLGPLAAIILLLLF). The essential for the fusiogenic function stretch occupies residues 465–484 (GPCIFNLLVNFVSSRIEAVK). Over 465 to 538 (GPCIFNLLVN…LLRPNSAGSS (74 aa)) the chain is Cytoplasmic. A disordered region spans residues 501 to 538 (PLDWPASPRSDVNDIKGTPPEEISTAQPLLRPNSAGSS).

It belongs to the gamma type-C retroviral envelope protein family. HERV class-I W env subfamily. As to quaternary structure, the mature envelope protein (Env) consists of a trimer of SU-TM heterodimers attached probably by a labile interchain disulfide bond. Interacts with the C-type lectin CD209/DC-SIGN. Post-translationally, specific enzymatic cleavages in vivo yield mature proteins. Envelope glycoproteins are synthesized as an inactive precursor that is heavily N-glycosylated and processed likely by furin in the Golgi to yield the mature SU and TM proteins. The cleavage site between SU and TM requires the minimal sequence [KR]-X-[KR]-R. In terms of processing, the CXXC motif is highly conserved across a broad range of retroviral envelope proteins. It is thought to participate in the formation of a labile disulfide bond possibly with the CX6CC motif present in the transmembrane protein.

It localises to the cell membrane. It is found in the virion. In terms of biological role, this endogenous retroviral envelope protein has retained its original fusogenic properties and participates in trophoblast fusion and the formation of a syncytium during placenta morphogenesis. May recognize and induce fusion through binding of SLC1A4 and SLC1A5. Its function is as follows. Endogenous envelope proteins may have kept, lost or modified their original function during evolution. Retroviral envelope proteins mediate receptor recognition and membrane fusion during early infection. The surface protein (SU) mediates receptor recognition, while the transmembrane protein (TM) acts as a class I viral fusion protein. The protein may have at least 3 conformational states: pre-fusion native state, pre-hairpin intermediate state, and post-fusion hairpin state. During viral and target cell membrane fusion, the coiled coil regions (heptad repeats) assume a trimer-of-hairpins structure, positioning the fusion peptide in close proximity to the C-terminal region of the ectodomain. The formation of this structure appears to drive apposition and subsequent fusion of membranes. In Pongo pygmaeus (Bornean orangutan), this protein is Syncytin-1 (ERVW-1).